Here is a 272-residue protein sequence, read N- to C-terminus: MARLAAFDMDGTLLMPDHHLGEKTLSTLARLRERDITLTFATGRHALEMQHILGALSLDAYLITGNGTRVHSLEGELLHRDDLPADVAELVLYQQWDTRASMHIFNDDGWFTGKEIPALLQAFVYSGFRYQIIDVKKMPLGSVTKICFCGDHDDLTRLQIQLYEALGERAHLCFSATDCLEVLPVGCNKGAALTVLTQHLGLSLRDCMAFGDAMNDREMLVSVGSGFIMGNAMPQLRAELPHLPVIGHCRNQAVSHYLTHWLDYPHLPYSPE.

The active-site Nucleophile is the aspartate 8. Residues aspartate 8, aspartate 10, and aspartate 212 each coordinate Mg(2+).

This sequence belongs to the HAD-like hydrolase superfamily. Cof family. It depends on Mg(2+) as a cofactor.

It carries out the reaction 4-amino-2-methyl-5-(diphosphooxymethyl)pyrimidine + H2O = 4-amino-2-methyl-5-(phosphooxymethyl)pyrimidine + phosphate + H(+). In terms of biological role, catalyzes the hydrolysis of 4-amino-2-methyl-5-hydroxymethylpyrimidine pyrophosphate (HMP-PP) to 4-amino-2-methyl-5-hydroxymethylpyrimidine phosphate (HMP-P). The chain is HMP-PP phosphatase from Escherichia coli (strain K12 / MC4100 / BW2952).